Consider the following 141-residue polypeptide: Nucleoside diphosphate kinase (141 aa).

Positions 11, 59, 87, 93, 104, and 114 each coordinate ATP. Catalysis depends on histidine 117, which acts as the Pros-phosphohistidine intermediate.

The protein belongs to the NDK family. As to quaternary structure, homotetramer. Mg(2+) serves as cofactor.

The protein resides in the cytoplasm. It carries out the reaction a 2'-deoxyribonucleoside 5'-diphosphate + ATP = a 2'-deoxyribonucleoside 5'-triphosphate + ADP. The catalysed reaction is a ribonucleoside 5'-diphosphate + ATP = a ribonucleoside 5'-triphosphate + ADP. Its function is as follows. Major role in the synthesis of nucleoside triphosphates other than ATP. The ATP gamma phosphate is transferred to the NDP beta phosphate via a ping-pong mechanism, using a phosphorylated active-site intermediate. In Photorhabdus laumondii subsp. laumondii (strain DSM 15139 / CIP 105565 / TT01) (Photorhabdus luminescens subsp. laumondii), this protein is Nucleoside diphosphate kinase.